The chain runs to 256 residues: Protein YIPF5 (256 aa).

Residues 1 to 125 (MSNFDNFNTD…ADGNIMNETD (125 aa)) lie on the Cytoplasmic side of the membrane. The helical transmembrane segment at 126 to 146 (LAGPMVFCLAFGATLLLAGKI) threads the bilayer. A topological domain (lumenal) is located at residue glutamine 147. A helical transmembrane segment spans residues 148-168 (FGYVYGISAIGCLGMYCLLNL). Over 169 to 172 (MSMT) the chain is Cytoplasmic. Residues 173–193 (GVSFGCVSSVLGYCLLPMIIL) traverse the membrane as a helical segment. Over 194–195 (SS) the chain is Lumenal. The helical transmembrane segment at 196–216 (FAVIFSLQGILGIVLAALIIG) threads the bilayer. Residues 217 to 235 (WCSFSASKIFISALAMDGQ) are Cytoplasmic-facing. Residues 236 to 256 (QVLVAYPCALLYGVFALISVF) form a helical membrane-spanning segment.

Belongs to the YIP1 family.

The protein localises to the endoplasmic reticulum membrane. Its subcellular location is the golgi apparatus. The protein resides in the cis-Golgi network membrane. Its function is as follows. Plays a role in transport between endoplasmic reticulum and Golgi. The polypeptide is Protein YIPF5 (yipf5) (Xenopus tropicalis (Western clawed frog)).